The primary structure comprises 406 residues: Tyrosine--tRNA ligase (406 aa).

Y35 is a binding site for L-tyrosine. The 'HIGH' region signature appears at 40-49 (PTADSLHVGH). Positions 168 and 172 each coordinate L-tyrosine. A 'KMSKS' region motif is present at residues 228-232 (KMGKT). Residue K231 participates in ATP binding. Residues 340–405 (STVLDVIAKV…GKKNYNKIEI (66 aa)) enclose the S4 RNA-binding domain.

Belongs to the class-I aminoacyl-tRNA synthetase family. TyrS type 1 subfamily. Homodimer.

It localises to the cytoplasm. It catalyses the reaction tRNA(Tyr) + L-tyrosine + ATP = L-tyrosyl-tRNA(Tyr) + AMP + diphosphate + H(+). Functionally, catalyzes the attachment of tyrosine to tRNA(Tyr) in a two-step reaction: tyrosine is first activated by ATP to form Tyr-AMP and then transferred to the acceptor end of tRNA(Tyr). The protein is Tyrosine--tRNA ligase of Clostridium botulinum (strain Eklund 17B / Type B).